A 46-amino-acid polypeptide reads, in one-letter code: Photosystem II reaction center protein K (46 aa).

Positions 1-9 (MLILFNTFA) are excised as a propeptide. Residues 25–45 (LPLIPLFFFLLVFVWQAAVGF) form a helical membrane-spanning segment.

The protein belongs to the PsbK family. As to quaternary structure, PSII is composed of 1 copy each of membrane proteins PsbA, PsbB, PsbC, PsbD, PsbE, PsbF, PsbH, PsbI, PsbJ, PsbK, PsbL, PsbM, PsbT, PsbX, PsbY, Psb30/Ycf12, peripheral proteins PsbO, CyanoQ (PsbQ), PsbU, PsbV and a large number of cofactors. It forms dimeric complexes.

The protein localises to the cellular thylakoid membrane. One of the components of the core complex of photosystem II (PSII). PSII is a light-driven water:plastoquinone oxidoreductase that uses light energy to abstract electrons from H(2)O, generating O(2) and a proton gradient subsequently used for ATP formation. It consists of a core antenna complex that captures photons, and an electron transfer chain that converts photonic excitation into a charge separation. The polypeptide is Photosystem II reaction center protein K (Prochlorococcus marinus (strain MIT 9301)).